The chain runs to 372 residues: N-methyl-L-tryptophan oxidase (372 aa).

4 to 34 lines the FAD pocket; that stretch reads DLIIIGSGSVGAAAGYYATRAGLNVLMTDAH. Cys308 is modified (S-8alpha-FAD cysteine).

It belongs to the MSOX/MTOX family. MTOX subfamily. As to quaternary structure, monomer. It depends on FAD as a cofactor.

It catalyses the reaction N(alpha)-methyl-L-tryptophan + O2 + H2O = L-tryptophan + formaldehyde + H2O2. Catalyzes the oxidative demethylation of N-methyl-L-tryptophan. In Escherichia coli O9:H4 (strain HS), this protein is N-methyl-L-tryptophan oxidase.